Reading from the N-terminus, the 711-residue chain is MKQLFATTSRGFEELLKVELTELGAQEAKVVQGGVHYQADDETLYRTLLWSRLASRILFPLIETKIYSDLDLYAAVSGFNWLAQFDERVTFFVDFNGTNQEIRHTQFGAMRVKDGIVDYFERQGKTRPDVDKIQPDVRIHAYLNRENLVISLDLSGEALHLRGYREDAGQAPLRETLAAAIVMRSGWQVGSPLVDPMCGSGTLLIEAAQMEAKIAPQLYRLHWGFDFWKAHNQSAWEKVKNEAIELAEEKQREIQPHFYGFDLDHRVLKKAQKNAQNAGVSHLIKWQQADVAALKNPRLNEVGTVICNPPYGERLGTTPALIALYSVFGQRLKKEFCGWNVSVFSSESTLLDCLRMRASRQFKAKNGPLDCVQKNYQVSERKSDAITDEKELEFNRTSEVAPDFANRLQKNIKKISKWAKQQELDAYRLYDADLPEYNLAVDRYADYIVVQEYAAPKNIDENKARQRLLDAVTATLQVTGVETNKLILKVRQKQKGTNQYEKLANKGEYFYVNEYGTQLWVNLTDYLDTGLFLDHRLTRKMIGELAKGKDFLNLFAYTGSATVHAALGGAKSTTTVDMSNTYLNWAEQNLILNDIEGKQHKLIQADCLQWLEKCDRQFDLIFADPPTFSNSKRMEESWDVQRDHVKLMRNLKRVLSNNGTIVFSNNKRGFKMNLVALEELGLSAIEISHKTLPLDFERNKQIHNCWMIQHI.

One can recognise a THUMP domain in the interval 43-154; that stretch reads TLYRTLLWSR…RENLVISLDL (112 aa).

It belongs to the methyltransferase superfamily. RlmKL family.

It localises to the cytoplasm. It carries out the reaction guanosine(2445) in 23S rRNA + S-adenosyl-L-methionine = N(2)-methylguanosine(2445) in 23S rRNA + S-adenosyl-L-homocysteine + H(+). The enzyme catalyses guanosine(2069) in 23S rRNA + S-adenosyl-L-methionine = N(2)-methylguanosine(2069) in 23S rRNA + S-adenosyl-L-homocysteine + H(+). Its function is as follows. Specifically methylates the guanine in position 2445 (m2G2445) and the guanine in position 2069 (m7G2069) of 23S rRNA. The polypeptide is Ribosomal RNA large subunit methyltransferase K/L (Haemophilus influenzae (strain ATCC 51907 / DSM 11121 / KW20 / Rd)).